The following is a 319-amino-acid chain: MKIFIHLPTWLGDTVMASPALYTIKEHFKDAQFILYGSFVSTALFKEFPNSKIIIENKLSRYKQALSLRKELGKIDLSFAFRSAFSSKIILHILKTKQRYFFDKNKYKEEHQVLKYLYFIENSLSIKAHFKDLKLPFKLKFQNPLILRNGKKILGLNPGASFGSAKRWDASYFAKVALNFSQSHDILIFGAGKAEQELCNEIYQILKEQNIKVKNLCNKTTIKTLCQNIAFCDLFITNDSGPMHLSAVYKVKTVAIFGPTKFTQTSPWQNENAKLVHLDLACMPCMQKTCPLKHHKCMKDLKPEKVIEQAKNLLKNSHL.

This sequence belongs to the glycosyltransferase 9 family.

It carries out the reaction an L-alpha-D-Hep-(1-&gt;5)-[alpha-Kdo-(2-&gt;4)]-alpha-Kdo-(2-&gt;6)-lipid A + ADP-L-glycero-beta-D-manno-heptose = an L-alpha-D-Hep-(1-&gt;3)-L-alpha-D-Hep-(1-&gt;5)-[alpha-Kdo-(2-&gt;4)]-alpha-Kdo-(2-&gt;6)-lipid A + ADP + H(+). Its pathway is bacterial outer membrane biogenesis; LOS core biosynthesis. In terms of biological role, glycosyltransferase involved in the biosynthesis of the core oligosaccharide region of lipooligosaccharide (LOS). Catalyzes the addition of the second heptose unit to the heptosyl-Kdo2-lipid A module. The polypeptide is Lipooligosaccharide heptosyltransferase 2 (Campylobacter jejuni subsp. jejuni serotype O:2 (strain ATCC 700819 / NCTC 11168)).